The following is a 125-amino-acid chain: Snaclec alboaggregin-A subunit beta (125 aa).

The C-type lectin domain occupies 1-125; it reads GFDCPFGWSS…TRYPVCKFXG (125 aa). Disulfide bonds link Cys-4-Cys-15, Cys-32-Cys-121, and Cys-98-Cys-113.

The protein belongs to the snaclec family. As to quaternary structure, heterotetramer of the subunits alpha, alpha', beta and beta'; disulfide-linked. In terms of tissue distribution, expressed by the venom gland.

It localises to the secreted. Its function is as follows. Potent platelet activator that aggregates platelets via both GPIbalpha (GP1BA) and GPVI (GP6). Induces a tyrosine phosphorylation profile in platelets that resembles this produced by collagen, involving the time dependent tyrosine phosphorylation of Fc receptor gamma chain (FCGR1A), phospholipase Cgamma2 (PLCG2), and LAT. The chain is Snaclec alboaggregin-A subunit beta from Trimeresurus albolabris (White-lipped pit viper).